The sequence spans 476 residues: Arginine biosynthesis bifunctional protein ArgJ, mitochondrial (476 aa).

6 residues coordinate substrate: Thr-193, Lys-219, Thr-237, Glu-337, Asn-471, and Ser-476. Thr-237 serves as the catalytic Nucleophile.

It belongs to the ArgJ family. In terms of assembly, heterodimer of an alpha and a beta chain. In terms of processing, the alpha and beta chains are autoproteolytically processed from a single precursor protein within the mitochondrion.

It is found in the mitochondrion matrix. It catalyses the reaction N(2)-acetyl-L-ornithine + L-glutamate = N-acetyl-L-glutamate + L-ornithine. The catalysed reaction is L-glutamate + acetyl-CoA = N-acetyl-L-glutamate + CoA + H(+). It participates in amino-acid biosynthesis; L-arginine biosynthesis; L-ornithine and N-acetyl-L-glutamate from L-glutamate and N(2)-acetyl-L-ornithine (cyclic): step 1/1. Its pathway is amino-acid biosynthesis; L-arginine biosynthesis; N(2)-acetyl-L-ornithine from L-glutamate: step 1/4. Functionally, catalyzes two activities which are involved in the cyclic version of arginine biosynthesis: the synthesis of acetylglutamate from glutamate and acetyl-CoA, and of ornithine by transacetylation between acetylornithine and glutamate. This Cryptococcus neoformans var. neoformans serotype D (strain B-3501A) (Filobasidiella neoformans) protein is Arginine biosynthesis bifunctional protein ArgJ, mitochondrial.